A 484-amino-acid chain; its full sequence is tRNA sulfurtransferase (484 aa).

A THUMP domain is found at 63–167 (REMIERLCCT…DQRLFVVHRQ (105 aa)). ATP is bound by residues 185-186 (LM), lysine 267, glycine 289, and glutamine 298. Cysteine 346 and cysteine 457 are disulfide-bonded. The 79-residue stretch at 405-483 (ALAGQIVLDI…GHANVRVYRP (79 aa)) folds into the Rhodanese domain. The active-site Cysteine persulfide intermediate is cysteine 457.

It belongs to the ThiI family.

The protein localises to the cytoplasm. The enzyme catalyses [ThiI sulfur-carrier protein]-S-sulfanyl-L-cysteine + a uridine in tRNA + 2 reduced [2Fe-2S]-[ferredoxin] + ATP + H(+) = [ThiI sulfur-carrier protein]-L-cysteine + a 4-thiouridine in tRNA + 2 oxidized [2Fe-2S]-[ferredoxin] + AMP + diphosphate. It catalyses the reaction [ThiS sulfur-carrier protein]-C-terminal Gly-Gly-AMP + S-sulfanyl-L-cysteinyl-[cysteine desulfurase] + AH2 = [ThiS sulfur-carrier protein]-C-terminal-Gly-aminoethanethioate + L-cysteinyl-[cysteine desulfurase] + A + AMP + 2 H(+). The protein operates within cofactor biosynthesis; thiamine diphosphate biosynthesis. Its function is as follows. Catalyzes the ATP-dependent transfer of a sulfur to tRNA to produce 4-thiouridine in position 8 of tRNAs, which functions as a near-UV photosensor. Also catalyzes the transfer of sulfur to the sulfur carrier protein ThiS, forming ThiS-thiocarboxylate. This is a step in the synthesis of thiazole, in the thiamine biosynthesis pathway. The sulfur is donated as persulfide by IscS. The polypeptide is tRNA sulfurtransferase (Azotobacter vinelandii (strain DJ / ATCC BAA-1303)).